Here is a 451-residue protein sequence, read N- to C-terminus: MKTITTFENKKVLVLGLARSGEAAARLLAKLGAIVTVNDGKPFDENPTAQSLLEEGIKVVCGSHPLELLDEDFCYMIKNPGIPYNNPMVKKALEKQIPVLTEVELAYLVSESQLIGITGSNGKTTTTTMIAEVLNAGGQRGLLAGNIGFPASEVVQAADDKDILVMELSSFQLMGVKEFRPHIAVITNLMPTHLDYHGSFEDYVAAKWNIQNQMSSSDFLVLNFNQGISKELAKTTKATIVPFSTTEKVDGAYVQDKQLFYKGENIMLVDDIGVPGSHNVENALATIAVAKLAGISNQVIRETLSNFGGVKHRLQSLGKVHGISFYNDSKSTNILATQKALSGFDNTKVILIAGGLDRGNEFDELIPDITGLKHMVVLGESASRVKRAAQKAGVTYSDALDVRDAVHKAYEVAQQGDVILLSPANASWDMYKNFEVRGDEFIDTFESLRGE.

Glycine 119–threonine 125 lines the ATP pocket.

It belongs to the MurCDEF family.

It is found in the cytoplasm. It carries out the reaction UDP-N-acetyl-alpha-D-muramoyl-L-alanine + D-glutamate + ATP = UDP-N-acetyl-alpha-D-muramoyl-L-alanyl-D-glutamate + ADP + phosphate + H(+). Its pathway is cell wall biogenesis; peptidoglycan biosynthesis. In terms of biological role, cell wall formation. Catalyzes the addition of glutamate to the nucleotide precursor UDP-N-acetylmuramoyl-L-alanine (UMA). The chain is UDP-N-acetylmuramoylalanine--D-glutamate ligase from Streptococcus agalactiae serotype III (strain NEM316).